The sequence spans 1090 residues: Telomerase reverse transcriptase (1090 aa).

Residues 184 to 301 (GFLLRPPSRK…PLEGGPSWRS (118 aa)) are disordered. The segment covering 190-204 (PSRKHKSFQVGKKTR) has biased composition (basic residues). Composition is skewed to basic and acidic residues over residues 218 to 232 (EESR…EVST) and 252 to 262 (HHEERRQHEAV). Positions 281-294 (KPPPETSAAPPPLE) are enriched in pro residues. The short motif at 316–321 (TLGFLY) is the TFLY; involved in RNA binding element. 2 interaction with RNA template regions span residues 371–376 (LPLRYF) and 477–503 (WKIK…ELAY). A Reverse transcriptase domain is found at 569–893 (SPAQVASLPK…CLFPWCGLLL (325 aa)). Mg(2+) contacts are provided by Asp666, Asp826, and Asp827.

It belongs to the reverse transcriptase family. Telomerase subfamily. In terms of assembly, catalytic subunit of the telomerase holoenzyme complex composed minimally of TERT and the telomerase RNA template component (TERC). In terms of tissue distribution, expressed at highest levels in gonads and brain, and at lower levels in heart, spleen, kidney, gill, muscle and skin. Detected in embryonic stem cell lines before and after differentiation. Isoform F is expressed in gonads, with higher levels in testis relative to ovary, but is not detected in other tissues. Isoform B is expressed predominantly in testis. Isoform C is up-regulated in embryonic stem cell lines after differentiation.

It is found in the nucleus. The protein resides in the chromosome. It localises to the telomere. The enzyme catalyses DNA(n) + a 2'-deoxyribonucleoside 5'-triphosphate = DNA(n+1) + diphosphate. Functionally, telomerase is a ribonucleoprotein enzyme essential for the replication of chromosome termini in most eukaryotes. It elongates telomeres. It is a reverse transcriptase that adds simple sequence repeats to chromosome ends by copying a template sequence within the RNA component of the enzyme. The chain is Telomerase reverse transcriptase from Oryzias latipes (Japanese rice fish).